Consider the following 234-residue polypeptide: Endonuclease NucS (234 aa).

Belongs to the NucS endonuclease family.

Its subcellular location is the cytoplasm. Cleaves both 3' and 5' ssDNA extremities of branched DNA structures. This Bifidobacterium animalis subsp. lactis (strain AD011) protein is Endonuclease NucS.